Reading from the N-terminus, the 613-residue chain is Dihydroxy-acid dehydratase (613 aa).

Asp81 contacts Mg(2+). Position 122 (Cys122) interacts with [2Fe-2S] cluster. 2 residues coordinate Mg(2+): Asp123 and Lys124. An N6-carboxylysine modification is found at Lys124. [2Fe-2S] cluster is bound at residue Cys195. Residue Glu491 participates in Mg(2+) binding. The active-site Proton acceptor is the Ser517.

This sequence belongs to the IlvD/Edd family. As to quaternary structure, homodimer. The cofactor is [2Fe-2S] cluster. Mg(2+) is required as a cofactor.

It carries out the reaction (2R)-2,3-dihydroxy-3-methylbutanoate = 3-methyl-2-oxobutanoate + H2O. It catalyses the reaction (2R,3R)-2,3-dihydroxy-3-methylpentanoate = (S)-3-methyl-2-oxopentanoate + H2O. The protein operates within amino-acid biosynthesis; L-isoleucine biosynthesis; L-isoleucine from 2-oxobutanoate: step 3/4. It functions in the pathway amino-acid biosynthesis; L-valine biosynthesis; L-valine from pyruvate: step 3/4. Functionally, functions in the biosynthesis of branched-chain amino acids. Catalyzes the dehydration of (2R,3R)-2,3-dihydroxy-3-methylpentanoate (2,3-dihydroxy-3-methylvalerate) into 2-oxo-3-methylpentanoate (2-oxo-3-methylvalerate) and of (2R)-2,3-dihydroxy-3-methylbutanoate (2,3-dihydroxyisovalerate) into 2-oxo-3-methylbutanoate (2-oxoisovalerate), the penultimate precursor to L-isoleucine and L-valine, respectively. This Vibrio vulnificus (strain CMCP6) protein is Dihydroxy-acid dehydratase.